Consider the following 913-residue polypeptide: MGPFKSSVFILILHLLEGALSDSLIQLNNNGYEGIVIAIDPNVPEDETLIQQIKDMVTQASPYLFEATGKRFYFKNVAILIPETWKTKADYVRPKLETYKNADVLVAESTPSGGDEPYTEHIGKCGDQGERIHLTPHFLAGKQLKEYGPQGRAFVHEWAHLRWGVFDEYNNDEKFYLSNGRIQAVRCSVGITGKIEVNKCQGGSCYTKRCTFNKATGLYEKGCEFIPHSQQTEKASIMFAQHVDSVVEFCTEQNHNKEAPNMQNTKCNLRSTWEVIRDSEDFKKTTPTTTQPPNPTFSLLQIGQRIVCLVLDKSGSMATGNRLNRLNQAGQLFLLQIIELRSWVGMVTFDSAAHVQSELIQINSGSDRDTLTKRLPTAASGGTSICSGLRLAFTVIKKKYPTDGSEIVLLTDGEDNTISGCFNEVKQSGAIIHTVALGPSAARELEELSKMTGGLQTYASDQVQNNGLIDAFGALSSGNGVVSERSIQLESKGSTLQNSQWMNGTVIVDSTVGKDTLFLVTWTTQPPQILLWDPSGQKQDGFVVDKNTKMAFLQIPGIAKVGTWKYSLQASSQTLTLTVTSRASSATLPPITVTSKMNKDTGKFPSPMIVYANIRQGASPILRASVTALIESENGKTVTLELLDNGAGADAAKDDGVYSRYFTTYDTNGRYSVKVRALGGVNAVRRRAIPQQSGVMYIPGWIENDEIQWNPPRPEIEDDVQRKQVCFSRTSSGGSFVASGVPNAPIPDLFPPCQITDLKAEIHGHSLINLTWTAPGDDYDHGTAHKYIIRISTSILDLRDKFNESLQVNTTALIPKEANSEEVFLFKPENITFENGTDLFIAIQAVDKVDLKSEISNIARVSLFIPPQTPPETPSPDETSAPCPNISINSTIPGIHILKIMWKWIGELQLSIG.

A signal peptide spans 1-21 (MGPFKSSVFILILHLLEGALS). The tract at residues 46–199 (DETLIQQIKD…GITGKIEVNK (154 aa)) is metalloprotease domain. His156 is a binding site for Zn(2+). Glu157 is a catalytic residue. Residues His160 and Asp167 each contribute to the Zn(2+) site. The region spanning 306 to 475 (IVCLVLDKSG…NGLIDAFGAL (170 aa)) is the VWFA domain. Asn503, Asn769, Asn803, Asn809, Asn830, Asn835, Asn885, and Asn889 each carry an N-linked (GlcNAc...) asparagine glycan. Residues 866 to 885 (PPQTPPETPSPDETSAPCPN) form a disordered region.

It belongs to the CLCR family. In terms of processing, glycosylated. The translation product is autoproteolytically cleaved by the metalloprotease domain in the endoplasmic reticulum into a N-terminal and a C-terminal products that remain physically associated with each other. The cleavage is necessary for calcium-activated chloride channel (CaCC) activation activity.

Its subcellular location is the secreted. It localises to the extracellular space. Its function is as follows. May be involved in mediating calcium-activated chloride conductance. May play critical roles in goblet cell metaplasia, mucus hypersecretion, cystic fibrosis and AHR. May be involved in the regulation of mucus production and/or secretion by goblet cells. Involved in the regulation of tissue inflammation in the innate immune response. May play a role as a tumor suppressor. Induces MUC5AC. The chain is Calcium-activated chloride channel regulator 1 (CLCA1) from Macaca mulatta (Rhesus macaque).